The chain runs to 885 residues: Alanine--tRNA ligase (885 aa).

Zn(2+)-binding residues include His574, His578, Cys685, and His689.

This sequence belongs to the class-II aminoacyl-tRNA synthetase family. Zn(2+) is required as a cofactor.

Its subcellular location is the cytoplasm. The catalysed reaction is tRNA(Ala) + L-alanine + ATP = L-alanyl-tRNA(Ala) + AMP + diphosphate. Its function is as follows. Catalyzes the attachment of alanine to tRNA(Ala) in a two-step reaction: alanine is first activated by ATP to form Ala-AMP and then transferred to the acceptor end of tRNA(Ala). Also edits incorrectly charged Ser-tRNA(Ala) and Gly-tRNA(Ala) via its editing domain. The protein is Alanine--tRNA ligase of Deinococcus geothermalis (strain DSM 11300 / CIP 105573 / AG-3a).